The primary structure comprises 152 residues: Deoxyuridine 5'-triphosphate nucleotidohydrolase (152 aa).

Substrate-binding positions include 71–73, Asn84, 88–90, and Met98; these read RSG and LID.

This sequence belongs to the dUTPase family. Mg(2+) serves as cofactor.

It carries out the reaction dUTP + H2O = dUMP + diphosphate + H(+). It participates in pyrimidine metabolism; dUMP biosynthesis; dUMP from dCTP (dUTP route): step 2/2. Functionally, this enzyme is involved in nucleotide metabolism: it produces dUMP, the immediate precursor of thymidine nucleotides and it decreases the intracellular concentration of dUTP so that uracil cannot be incorporated into DNA. This Serratia proteamaculans (strain 568) protein is Deoxyuridine 5'-triphosphate nucleotidohydrolase.